The sequence spans 548 residues: MKKVTAMLFSMAVGLNAVSMAAKAKASEEQETDVLLIGGGIMSATLGTYLRELEPEWSMTMVERLEGVAQESSNGWNNAGTGHSALMELNYTPQNADGSISIEKAVAINEAFQISRQFWAHQVERGVLRTPRSFINTVPHMSFVWGEDNVNFLRARYAALQQSSLFRGMRYSEDHAQIKEWAPLVMEGRDPQQKVAATRTEIGTDVNYGEITRQLISSLQKKSNFSLQLSSEVRALKRNDDNTWTVTVADLKNGTAQNIRAKFVFIGAGGAALKLLQESGIPEAKDYAGFPVGGQFLVSENPDVVNHHLAKVYGKASVGAPPMSVPHIDTRVLDGKRVVLFGPFATFSTKFLKNGSLWDLMSSTTTSNVMPMMHVGLDNFDLVKYLVSQVMLSEEDRFEALKEYYPQAKKEDWRLWQAGQRVQIIKRDADKGGVLRLGTEVVSDQQGTIAALLGASPGASTAAPIMLNLLEKVFGDRVSSPQWQATLKAIVPSYGRKLNGDVAATERELQYTSEVLGLKYDRPQAADSTPKPQLKPQPVQKEVADIAL.

Positions 520 to 548 (YDRPQAADSTPKPQLKPQPVQKEVADIAL) are disordered. The span at 530–541 (PKPQLKPQPVQK) shows a compositional bias: low complexity.

The protein belongs to the MQO family. The cofactor is FAD.

It catalyses the reaction (S)-malate + a quinone = a quinol + oxaloacetate. It functions in the pathway carbohydrate metabolism; tricarboxylic acid cycle; oxaloacetate from (S)-malate (quinone route): step 1/1. The polypeptide is Probable malate:quinone oxidoreductase (Shigella dysenteriae serotype 1 (strain Sd197)).